Here is a 95-residue protein sequence, read N- to C-terminus: Alpha-conotoxin GeXXA (95 aa).

The signal sequence occupies residues 1-21 (MPKQEKMMLVLLILPLPYCNA). Positions 22-45 (AGVTTVQWGGHGDGLDRYLQRGVR) are excised as a propeptide. 4 cysteine pairs are disulfide-bonded: C64/C73, C69/C81, C74/C91, and C79/C93.

Belongs to the conotoxin D superfamily. As to quaternary structure, homodimer. Pseudo-homodimer (identical sequence, different post-translational modifications). Expressed by the venom duct.

Its subcellular location is the secreted. In terms of biological role, alpha-D-conopeptides act as non-competitive inhibitors of nicotinic acetylcholine receptors (nAChR). Through its two C-terminal domains, this homodimeric protein would bind to two nAChR allosteric sites, located outside the nAChR C-loop of the principal binding face and at the adjacent binding interface in a clockwise direction. This toxin has strong inhibitory activity on rat alpha-9-alpha-10 (CHRNA9-CHRNA10) (IC(50)=1.2 nM) and a moderate inhibitory activity on human alpha-7 (CHRNA7) (IC(50)=210 nM), rat alpha-3-beta-2 (CHRNA3-CHRNB2) (IC(50)=498 nM), rat alpha-3-beta-4 (CHRNA3-CHRNB4) (IC(50)=614 nM) and rat alpha-1-beta-1-delta-epsilon (CHRNA1-CHRNB1-CHRNE-CHRND) (IC(50)=743 nM) subtypes. Shows a weaker inhibitory activity on human alpha-9-alpha-10 (IC(50)=28 nM) than on the rat channel. This is explained by a different residue in the probable binding site (His-31 in rat alpha-10 and Leu-31 in human). The polypeptide is Alpha-conotoxin GeXXA (Conus generalis (General cone)).